The sequence spans 182 residues: Rhodanese-like domain-containing protein 15, chloroplastic (182 aa).

The N-terminal 65 residues, 1–65, are a transit peptide targeting the chloroplast; the sequence is METTAFNTTS…TTSRGNVAAE (65 aa). The Rhodanese domain occupies 82–182; sequence AQAGYRYLDV…WTENELPVEE (101 aa). The active-site Cysteine persulfide intermediate is C142.

Its subcellular location is the plastid. The protein resides in the chloroplast. The protein localises to the thylakoid. This is Rhodanese-like domain-containing protein 15, chloroplastic (STR15) from Arabidopsis thaliana (Mouse-ear cress).